Reading from the N-terminus, the 381-residue chain is Creatine kinase M-type (381 aa).

One can recognise a Phosphagen kinase N-terminal domain in the interval 11–98 (KLNFKAEEEY…FDPIIQDRHG (88 aa)). The region spanning 125–367 (YVLSSRVRTG…KLMVEMEKKL (243 aa)) is the Phosphagen kinase C-terminal domain. 128 to 132 (SSRVR) contacts ATP. Position 164 is a phosphoserine (Ser-164). Position 166 is a phosphothreonine (Thr-166). The residue at position 178 (Ser-178) is a Phosphoserine. Thr-180 carries the post-translational modification Phosphothreonine. His-191 contacts ATP. The residue at position 199 (Ser-199) is a Phosphoserine. The ATP site is built by Arg-236 and Arg-292. 2 positions are modified to phosphothreonine: Thr-313 and Thr-322. Residues 320-325 (RGTGGV) and Asp-335 contribute to the ATP site. Phosphoserine is present on Ser-372.

Belongs to the ATP:guanido phosphotransferase family. As to quaternary structure, dimer of identical or non-identical chains, which can be either B (brain type) or M (muscle type). With MM being the major form in skeletal muscle and myocardium, MB existing in myocardium, and BB existing in many tissues, especially brain.

The catalysed reaction is creatine + ATP = N-phosphocreatine + ADP + H(+). Reversibly catalyzes the transfer of phosphate between ATP and various phosphogens (e.g. creatine phosphate). Creatine kinase isoenzymes play a central role in energy transduction in tissues with large, fluctuating energy demands, such as skeletal muscle, heart, brain and spermatozoa. The protein is Creatine kinase M-type (CKM) of Sus scrofa (Pig).